We begin with the raw amino-acid sequence, 191 residues long: MIRISDAAQAHFAKLLANQEEGTQIRVFVINPGAPNAECGVSYCPPDAVEATDTALKFDLLTAYVDELSAPYLEDAEIDFVTDQLGSQLTLKAPNAKMRKVADDAPLMERVEYALQSQINPQLAGHGGRVSLMEITDEGYAILQFGGGCNGCSMVDVTLKEGIEKQLLNEFPELKGVRDLTEHQRGEHSYY.

Residues Cys-149 and Cys-152 each coordinate [4Fe-4S] cluster.

This sequence belongs to the NfuA family. In terms of assembly, homodimer. It depends on [4Fe-4S] cluster as a cofactor.

Its function is as follows. Involved in iron-sulfur cluster biogenesis. Binds a 4Fe-4S cluster, can transfer this cluster to apoproteins, and thereby intervenes in the maturation of Fe/S proteins. Could also act as a scaffold/chaperone for damaged Fe/S proteins. The polypeptide is Fe/S biogenesis protein NfuA (Salmonella paratyphi A (strain ATCC 9150 / SARB42)).